The following is a 73-amino-acid chain: SIFamide-related peptide (73 aa).

The signal sequence occupies residues 1–23; the sequence is MVSIRLTFALAIVAIIFAFSVDA. Phenylalanine amide is present on Phe-35. Residues 39-73 constitute a propeptide that is removed on maturation; the sequence is SNTMTDYEFTSRALSAICEVASETCTAWMSRQESN.

In terms of tissue distribution, expressed in brain, the retrocerebral complex and in ventral, thoracic and abdominal ganglia (at protein level).

The protein resides in the secreted. The sequence is that of SIFamide-related peptide from Camponotus floridanus (Florida carpenter ant).